The primary structure comprises 381 residues: GDP-mannose-dependent monoacylated alpha-(1-6)-phosphatidylinositol monomannoside mannosyltransferase (381 aa).

4 residues coordinate GDP-alpha-D-mannose: Arg-206, Lys-211, Leu-261, and Glu-298.

The protein belongs to the glycosyltransferase group 1 family. Glycosyltransferase 4 subfamily.

The enzyme catalyses a 1,2-diacyl-sn-glycero-3-phospho-[alpha-D-mannopyranosyl-(1&lt;-&gt;6)-D-myo-inositol] + GDP-alpha-D-mannose = a 2,6-O-bis(alpha-D-mannopyranosyl)-1-phosphatidyl-1D-myo-inositol + GDP + H(+). It catalyses the reaction a 1,2-diacyl-sn-glycero-3-phospho-[alpha-D-6-acyl-mannopyranosyl-(1&lt;-&gt;6)-D-myo-inositol] + GDP-alpha-D-mannose = a 2-O-(alpha-D-mannosyl)-6-O-(6-O-acyl-alpha-D-mannosyl)-1-phosphatidyl-1D-myo-inositol + GDP + H(+). The protein operates within phospholipid metabolism; phosphatidylinositol metabolism. Its function is as follows. Involved in the biosynthesis of phosphatidyl-myo-inositol mannosides (PIM) which are early precursors in the biosynthesis of lipomannans (LM) and lipoarabinomannans (LAM). Catalyzes the addition of a mannosyl residue from GDP-D-mannose (GDP-Man) to the position 6 of a phosphatidyl-myo-inositol bearing an alpha-1,2-linked mannose residue (PIM1) to generate phosphatidyl-myo-inositol bearing alpha-1,2- and alpha-1,6-linked mannose residues (Ac1PIM2). PimB also catalyzes the addition of a mannosyl residue from GDP-Man to the position 6 of phosphatidyl-myo-inositol bearing an acylated alpha-1,2-linked mannose residue (Ac1PIM1) to generate monoacylated phosphatidyl-myo-inositol bearing alpha-1,2- and alpha-1,6-linked mannose residues (Ac1PIM2). The addition of the second mannosyl residue by PimB preferentially occurs before the acylation of the mannosyl residue transferred by PimA. Also able to transfer a mannosyl residue from GDP-Man to the position 6 of a phosphatidyl-myo-inositol (PI), but this reaction is very slow. In Corynebacterium glutamicum (strain ATCC 13032 / DSM 20300 / JCM 1318 / BCRC 11384 / CCUG 27702 / LMG 3730 / NBRC 12168 / NCIMB 10025 / NRRL B-2784 / 534), this protein is GDP-mannose-dependent monoacylated alpha-(1-6)-phosphatidylinositol monomannoside mannosyltransferase.